We begin with the raw amino-acid sequence, 453 residues long: Na(+)/H(+) antiporter NhaA (453 aa).

Helical transmembrane passes span 27–47, 78–98, 114–134, 143–163, 172–192, 201–221, 222–242, 316–336, 346–366, 385–405, and 421–441; these read FLHIEALSGIVLLLAAASALI, LHFWVNDALMTIFFLVAGMEI, ILPIVAAIGGVCVPAIIYFIF, GWAVPTATDIAFALGILALLG, IILLSLAIIDDIIAVLIIAFF, GLLIAGGGIALVLFFQWIGLA, SAWLYILPGAIIWWGLMVTGV, PWVAYGIMPVFAFANAGVSFA, FLIVFGVVIGLFVGKPLGIIT, WAGILLIGFLAGIGFTMSIFV, and IGVLCGSGLSALIGLGYGFIY.

It belongs to the NhaA Na(+)/H(+) (TC 2.A.33) antiporter family.

It localises to the cell inner membrane. It catalyses the reaction Na(+)(in) + 2 H(+)(out) = Na(+)(out) + 2 H(+)(in). In terms of biological role, na(+)/H(+) antiporter that extrudes sodium in exchange for external protons. In Bartonella tribocorum (strain CIP 105476 / IBS 506), this protein is Na(+)/H(+) antiporter NhaA.